A 333-amino-acid polypeptide reads, in one-letter code: Phosphate acyltransferase (333 aa).

Belongs to the PlsX family. In terms of assembly, homodimer. Probably interacts with PlsY.

The protein resides in the cytoplasm. It carries out the reaction a fatty acyl-[ACP] + phosphate = an acyl phosphate + holo-[ACP]. It participates in lipid metabolism; phospholipid metabolism. Catalyzes the reversible formation of acyl-phosphate (acyl-PO(4)) from acyl-[acyl-carrier-protein] (acyl-ACP). This enzyme utilizes acyl-ACP as fatty acyl donor, but not acyl-CoA. The polypeptide is Phosphate acyltransferase (Helicobacter hepaticus (strain ATCC 51449 / 3B1)).